The primary structure comprises 836 residues: Protein IWS1 homolog A (836 aa).

Residues 1–542 are disordered; sequence MEADNYSPEH…DMKSGKMGDY (542 aa). Basic and acidic residues-rich tracts occupy residues 20–36, 43–122, 133–148, 157–186, 206–218, 288–309, 370–386, and 458–469; these read QDER…EQRS, HQSE…DRSP, EPVR…DVPR, DERH…DKAP, DSKD…HAAS, VPVK…KASD, RSSE…KKLQ, and ERKSKTETKSAD. The span at 476–485 shows a compositional bias: acidic residues; that stretch reads SDSENEEENL. Basic and acidic residues predominate over residues 533-542; that stretch reads DMKSGKMGDY. The TFIIS N-terminal domain occupies 631-709; the sequence is SAIKEWLTPL…NEWSRPIFGL (79 aa). Residues 714–746 are disordered; that stretch reads KGMTREEREQRDIEQMPQRRRMSSSGGQTPRRD. A compositionally biased stretch (basic and acidic residues) spans 716 to 727; sequence MTREEREQRDIE.

This sequence belongs to the IWS1 family.

The protein localises to the nucleus. Functionally, transcription factor which plays a key role in defining the composition of the RNA polymerase II (RNAPII) elongation complex and in modulating the production of mature mRNA transcripts. In Xenopus laevis (African clawed frog), this protein is Protein IWS1 homolog A (iws1-a).